The primary structure comprises 201 residues: Recombination protein RecR (201 aa).

A C4-type zinc finger spans residues C60–C75. The 96-residue stretch at T83–P178 folds into the Toprim domain.

It belongs to the RecR family.

Functionally, may play a role in DNA repair. It seems to be involved in an RecBC-independent recombinational process of DNA repair. It may act with RecF and RecO. This chain is Recombination protein RecR, found in Methylobacterium radiotolerans (strain ATCC 27329 / DSM 1819 / JCM 2831 / NBRC 15690 / NCIMB 10815 / 0-1).